Here is a 245-residue protein sequence, read N- to C-terminus: 5'-nucleotidase SurE (245 aa).

Residues D8, D9, S39, and N91 each coordinate a divalent metal cation.

The protein belongs to the SurE nucleotidase family. Requires a divalent metal cation as cofactor.

The protein localises to the cytoplasm. The catalysed reaction is a ribonucleoside 5'-phosphate + H2O = a ribonucleoside + phosphate. Its function is as follows. Nucleotidase that shows phosphatase activity on nucleoside 5'-monophosphates. This Psychromonas ingrahamii (strain DSM 17664 / CCUG 51855 / 37) protein is 5'-nucleotidase SurE.